Consider the following 262-residue polypeptide: Acyl-[acyl-carrier-protein]--UDP-N-acetylglucosamine O-acyltransferase (262 aa).

This sequence belongs to the transferase hexapeptide repeat family. LpxA subfamily. In terms of assembly, homotrimer.

Its subcellular location is the cytoplasm. The enzyme catalyses a (3R)-hydroxyacyl-[ACP] + UDP-N-acetyl-alpha-D-glucosamine = a UDP-3-O-[(3R)-3-hydroxyacyl]-N-acetyl-alpha-D-glucosamine + holo-[ACP]. Its pathway is glycolipid biosynthesis; lipid IV(A) biosynthesis; lipid IV(A) from (3R)-3-hydroxytetradecanoyl-[acyl-carrier-protein] and UDP-N-acetyl-alpha-D-glucosamine: step 1/6. Its function is as follows. Involved in the biosynthesis of lipid A, a phosphorylated glycolipid that anchors the lipopolysaccharide to the outer membrane of the cell. The sequence is that of Acyl-[acyl-carrier-protein]--UDP-N-acetylglucosamine O-acyltransferase from Shigella boydii serotype 18 (strain CDC 3083-94 / BS512).